An 88-amino-acid polypeptide reads, in one-letter code: MSLLDYFRSTKKPNTASLAKERLQIIVAHQRSGRGGGAPEYLPKMKQEIIEVIRKYVQISEDQVSVQLDQNDDNLSVLELNVTLPDTK.

The protein belongs to the MinE family.

In terms of biological role, prevents the cell division inhibition by proteins MinC and MinD at internal division sites while permitting inhibition at polar sites. This ensures cell division at the proper site by restricting the formation of a division septum at the midpoint of the long axis of the cell. This chain is Cell division topological specificity factor, found in Shewanella denitrificans (strain OS217 / ATCC BAA-1090 / DSM 15013).